Here is a 316-residue protein sequence, read N- to C-terminus: Fe-S cluster assembly protein DRE2 (316 aa).

Residues 4-156 (SMPVATTVAA…KPQHVASTSV (153 aa)) form an N-terminal SAM-like domain region. The linker stretch occupies residues 157–202 (PLKSRQPGALLNRKKTDPAKKQALWALSSPSTPKIDPEALLTAEDK). 4 residues coordinate [2Fe-2S] cluster: Cys209, Cys223, Cys226, and Cys228. Positions 209-228 (CEPVRSSAPRRKKACKSCSC) are fe-S binding site A. [4Fe-4S] cluster is bound by residues Cys279, Cys282, Cys290, and Cys293. Short sequence motifs (cx2C motif) lie at residues 279–282 (CGSC) and 290–293 (CAGC). The fe-S binding site B stretch occupies residues 279–293 (CGSCFLGDAFRCAGC).

This sequence belongs to the anamorsin family. As to quaternary structure, monomer. Interacts with TAH18. Interacts with MIA40. [2Fe-2S] cluster is required as a cofactor. Requires [4Fe-4S] cluster as cofactor.

Its subcellular location is the cytoplasm. The protein resides in the mitochondrion intermembrane space. Its function is as follows. Component of the cytosolic iron-sulfur (Fe-S) protein assembly (CIA) machinery required for the maturation of extramitochondrial Fe-S proteins. Part of an electron transfer chain functioning in an early step of cytosolic Fe-S biogenesis, facilitating the de novo assembly of a [4Fe-4S] cluster on the scaffold complex CFD1-NBP35. Electrons are transferred to DRE2 from NADPH via the FAD- and FMN-containing protein TAH18. TAH18-DRE2 are also required for the assembly of the diferric tyrosyl radical cofactor of ribonucleotide reductase (RNR), probably by providing electrons for reduction during radical cofactor maturation in the catalytic small subunit RNR2. The chain is Fe-S cluster assembly protein DRE2 from Laccaria bicolor (strain S238N-H82 / ATCC MYA-4686) (Bicoloured deceiver).